Consider the following 134-residue polypeptide: MKFAIVLIACFAASVLAQEHKPKKDDFRNEFDHLLIEQANHAIEKGEHQLLYLQHQLDELNENKSKELQEKIIRELDVVCAMIEGAQGALERELKRTDLNILERFNYEEAQTLSKILLKDLKETEQKVKDIQTQ.

The first 17 residues, 1–17 (MKFAIVLIACFAASVLA), serve as a signal peptide directing secretion. A coiled-coil region spans residues 18–113 (QEHKPKKDDF…RFNYEEAQTL (96 aa)).

This sequence belongs to the mite group 5 allergen family. As to quaternary structure, may exist as homodimer and homotrimer. As to expression, midgut and hindgut contents as well as fecal pellets (at protein level).

The chain is Mite allergen Blo t 5 (BLOT5) from Blomia tropicalis (Mite).